The following is a 231-amino-acid chain: NADH-ubiquinone oxidoreductase chain 4 (231 aa).

Transmembrane regions (helical) follow at residues 1-21 (PIAG…YGII), 34-54 (MFLP…LTCL), 63-85 (IAYS…TPWG), 89-111 (AMAL…NTTY), 118-138 (ILIL…WWLL), and 169-189 (TIIL…HMFL).

The protein belongs to the complex I subunit 4 family.

The protein resides in the mitochondrion membrane. The catalysed reaction is a ubiquinone + NADH + 5 H(+)(in) = a ubiquinol + NAD(+) + 4 H(+)(out). In terms of biological role, core subunit of the mitochondrial membrane respiratory chain NADH dehydrogenase (Complex I) that is believed to belong to the minimal assembly required for catalysis. Complex I functions in the transfer of electrons from NADH to the respiratory chain. The immediate electron acceptor for the enzyme is believed to be ubiquinone. The sequence is that of NADH-ubiquinone oxidoreductase chain 4 (MT-ND4) from Trimeresurus cantori (Cantor's pit viper).